The sequence spans 548 residues: MNAKMTIWKSTLCNLERDFPSTDRVPFFAWATGKASINDFVLPSVSCEKGNFLKISAPQRMDLPVILKTSIDSSTAYKHSRLKFRLKEVAPKCYSDIMQMIGEKEPVVLVFNKVLDTAEATVSGVITNFLIHSSIQKQIILPPHFHISRDDFRIYPQDDEARLNTHLNRLNSLKADGVKTSILPIGHKGAGKSNLMRNLVNRCLSNGYEHVYVLDCDIGQSEFTPNGCISLTKVTSPLLDKPYGHQKKTFDNSYFYGDITVNDNNIDHYMDIFERLFNKFKLISEPGSVCIVNSMGWIVDEGAEILDGIIRVIEPDLCVEIFRDQTEARYSFKEFEKCKVVEIFANNSVGVIGLPNQKKLPAPLHRELTITGYFSSLLPRPTIASFASVPPYRLNFRNITICLPMDLLVEDCHIFSSINTQLIALCVKNPDLKTRKLNGKQDMPSLSVIDSTSPALQCIGFGIIRGVNVEERSVYVVTPVNLLKLQEPPLLVRGMRIQTPSQFFTADPYNRCPYVLNLPDKSSHASANLDGLYEPSINTTQFKRSRRF.

Residue 186–193 (GHKGAGKS) participates in ATP binding.

The protein belongs to the Clp1 family. NOL9/GRC3 subfamily.

The protein resides in the nucleus. It localises to the nucleolus. In terms of biological role, polynucleotide 5'-kinase involved in rRNA processing. The sequence is that of Polynucleotide 5'-hydroxyl-kinase nol-9 (nol-9) from Caenorhabditis briggsae.